The following is a 143-amino-acid chain: Hemoglobin anodic subunit alpha (143 aa).

Ser2 is subject to N-acetylserine. Positions 2–143 (SLSAKDMAVV…FTLALSERYR (142 aa)) constitute a Globin domain. Residue His60 coordinates O2. Position 89 (His89) interacts with heme b.

This sequence belongs to the globin family. As to quaternary structure, heterotetramer of two alpha chains and two beta chains. In terms of tissue distribution, red blood cells.

In terms of biological role, involved in oxygen transport from gills to the various peripheral tissues. The polypeptide is Hemoglobin anodic subunit alpha (hba) (Anguilla anguilla (European freshwater eel)).